A 225-amino-acid polypeptide reads, in one-letter code: Leucyl/phenylalanyl-tRNA--protein transferase (225 aa).

The protein belongs to the L/F-transferase family.

The protein localises to the cytoplasm. The enzyme catalyses N-terminal L-lysyl-[protein] + L-leucyl-tRNA(Leu) = N-terminal L-leucyl-L-lysyl-[protein] + tRNA(Leu) + H(+). It carries out the reaction N-terminal L-arginyl-[protein] + L-leucyl-tRNA(Leu) = N-terminal L-leucyl-L-arginyl-[protein] + tRNA(Leu) + H(+). The catalysed reaction is L-phenylalanyl-tRNA(Phe) + an N-terminal L-alpha-aminoacyl-[protein] = an N-terminal L-phenylalanyl-L-alpha-aminoacyl-[protein] + tRNA(Phe). Functions in the N-end rule pathway of protein degradation where it conjugates Leu, Phe and, less efficiently, Met from aminoacyl-tRNAs to the N-termini of proteins containing an N-terminal arginine or lysine. This is Leucyl/phenylalanyl-tRNA--protein transferase from Rhodopseudomonas palustris (strain TIE-1).